The chain runs to 1383 residues: ATP-dependent RNA helicase TDRD9 (1383 aa).

A disordered region spans residues 35–82 (EAPREEVQRSEEVPNEDPTAQAQVPVKATAPARPASTSGRSLSQRSSE). The span at 36 to 46 (APREEVQRSEE) shows a compositional bias: basic and acidic residues. Residues 70 to 80 (STSGRSLSQRS) are compositionally biased toward low complexity. Positions 144-310 (ISLIESNSVV…FAVPVQNKMN (167 aa)) constitute a Helicase ATP-binding domain. ATP is bound at residue 157–164 (GATGSGKS). The short motif at 256 to 259 (DEVH) is the DEAH box element. A Helicase C-terminal domain is found at 378–545 (SGAQFVSERS…ILKVKLLDMG (168 aa)). Residues 945–1005 (HPHPDLVCLA…REIPCQFLEL (61 aa)) form the Tudor domain.

It belongs to the DEAD box helicase family. DEAH subfamily. As to quaternary structure, interacts with piRNA-associated proteins PIWIL1 and PIWIL4. Predominantly expressed in reproductive organs. Detected in mitotic spermatogonia, meiotic spermatocytes (predominantly at the pachytene stage), haploid spermatids in the testis, and in growing oocytes in the ovary (at protein level).

It is found in the cytoplasm. Its subcellular location is the nucleus. It catalyses the reaction ATP + H2O = ADP + phosphate + H(+). ATP-binding RNA helicase which plays a central role during spermatogenesis by repressing transposable elements and preventing their mobilization, which is essential for the germline integrity. Acts via the piRNA metabolic process, which mediates the repression of transposable elements during meiosis by forming complexes composed of piRNAs and Piwi proteins and governs the methylation and subsequent repression of transposons. Acts downstream of piRNA biogenesis: exclusively required for transposon silencing in the nucleus, suggesting that it acts as a nuclear effector in the nucleus together with PIWIL4. The sequence is that of ATP-dependent RNA helicase TDRD9 from Mus musculus (Mouse).